Consider the following 699-residue polypeptide: Elongation factor G (699 aa).

Positions 8–290 (NKYRNLGIMA…KVIELLPSPV (283 aa)) constitute a tr-type G domain. Residues 17-24 (AHIDAGKT), 88-92 (DTPGH), and 142-145 (NKMD) each bind GTP.

Belongs to the TRAFAC class translation factor GTPase superfamily. Classic translation factor GTPase family. EF-G/EF-2 subfamily.

The protein localises to the cytoplasm. In terms of biological role, catalyzes the GTP-dependent ribosomal translocation step during translation elongation. During this step, the ribosome changes from the pre-translocational (PRE) to the post-translocational (POST) state as the newly formed A-site-bound peptidyl-tRNA and P-site-bound deacylated tRNA move to the P and E sites, respectively. Catalyzes the coordinated movement of the two tRNA molecules, the mRNA and conformational changes in the ribosome. This is Elongation factor G from Dichelobacter nodosus (strain VCS1703A).